The chain runs to 597 residues: Gigaxonin (597 aa).

The 70-residue stretch at 30 to 99 folds into the BTB domain; sequence CDAHLVLDGE…IFSGQIRLNE (70 aa). A BACK domain is found at 134 to 236; sequence CIGIRDFALH…DSSYLREQML (103 aa). Kelch repeat units lie at residues 274-326, 327-374, 376-421, 422-468, 470-522, and 528-574; these read CIVT…SAEG, FLFV…EIDG, LYIL…AMKK, KIYA…GVAM, LYVF…VYGA, and SIYV…AALR.

Interacts with TBCB. Interacts with CUL3. Part of a complex that contains CUL3, RBX1 and GAN. Interacts (via BTB domain) with UBA1. Interacts (via Kelch domains) with MAP1B (via C-terminus) and MAP1S (via C-terminus). In terms of processing, ubiquitinated by E3 ubiquitin ligase complex formed by CUL3 and RBX1 and probably targeted for proteasome-independent degradation. In terms of tissue distribution, expressed in brain, heart and muscle (at protein level).

The protein localises to the cytoplasm. The protein resides in the cytoskeleton. It participates in protein modification; protein ubiquitination. Probable cytoskeletal component that directly or indirectly plays an important role in neurofilament architecture. May act as a substrate-specific adapter of an E3 ubiquitin-protein ligase complex which mediates the ubiquitination and subsequent proteasomal degradation of target proteins. Controls degradation of TBCB. Controls degradation of MAP1B and MAP1S, and is critical for neuronal maintenance and survival. The polypeptide is Gigaxonin (Mus musculus (Mouse)).